The primary structure comprises 611 residues: tRNA uridine 5-carboxymethylaminomethyl modification enzyme MnmG (611 aa).

12-17 (GGGHSG) is a binding site for FAD. Position 271 to 285 (271 to 285 (GPRYCPSIEEKVYRF)) interacts with NAD(+).

The protein belongs to the MnmG family. As to quaternary structure, homodimer. Heterotetramer of two MnmE and two MnmG subunits. Requires FAD as cofactor.

It localises to the cytoplasm. In terms of biological role, NAD-binding protein involved in the addition of a carboxymethylaminomethyl (cmnm) group at the wobble position (U34) of certain tRNAs, forming tRNA-cmnm(5)s(2)U34. This Karelsulcia muelleri (strain GWSS) (Sulcia muelleri) protein is tRNA uridine 5-carboxymethylaminomethyl modification enzyme MnmG.